The sequence spans 438 residues: Glycerol-3-phosphate acyltransferase 3 (438 aa).

The helical transmembrane segment at 14 to 34 (WLTLVGGLILLPSAFGLSLGI) threads the bilayer. A phosphoserine mark is found at Ser68 and Ser77. 2 consecutive transmembrane segments (helical) span residues 137 to 157 (ISPR…CFLL) and 161 to 181 (VTLA…VGQL). The HXXXXD motif signature appears at 229–234 (HTSPID).

This sequence belongs to the 1-acyl-sn-glycerol-3-phosphate acyltransferase family. As to expression, most abundant in epididymal fat, followed by small intestine, brown adipose tissue, kidney, heart and colon.

It is found in the endoplasmic reticulum membrane. It catalyses the reaction sn-glycerol 3-phosphate + an acyl-CoA = a 1-acyl-sn-glycero-3-phosphate + CoA. It carries out the reaction a 1-acyl-sn-glycero-3-phosphate + an acyl-CoA = a 1,2-diacyl-sn-glycero-3-phosphate + CoA. The enzyme catalyses dodecanoyl-CoA + sn-glycerol 3-phosphate = 1-dodecanoyl-sn-glycerol 3-phosphate + CoA. The catalysed reaction is sn-glycerol 3-phosphate + hexadecanoyl-CoA = 1-hexadecanoyl-sn-glycero-3-phosphate + CoA. It catalyses the reaction sn-glycerol 3-phosphate + (9Z)-octadecenoyl-CoA = 1-(9Z-octadecenoyl)-sn-glycero-3-phosphate + CoA. It carries out the reaction (9Z,12Z)-octadecadienoyl-CoA + sn-glycerol 3-phosphate = 1-(9Z,12Z)-octadecadienoyl-sn-glycero-3-phosphate + CoA. The enzyme catalyses 1-tetradecanoyl-sn-glycerol 3-phosphate + (9Z)-octadecenoyl-CoA = 1-tetradecanoyl-2-(9Z)-octadecenoyl-sn-glycero-3-phosphate + CoA. The catalysed reaction is 1-hexadecanoyl-sn-glycero-3-phosphate + (9Z)-octadecenoyl-CoA = 1-hexadecanoyl-2-(9Z-octadecenoyl)-sn-glycero-3-phosphate + CoA. It catalyses the reaction 1-(9Z-octadecenoyl)-sn-glycero-3-phosphate + (9Z)-octadecenoyl-CoA = 1,2-di-(9Z-octadecenoyl)-sn-glycero-3-phosphate + CoA. It carries out the reaction 1-(6Z,9Z,12Z-octadecatrienoyl)-sn-glycero-3-phosphate + (9Z)-octadecenoyl-CoA = (6Z,9Z,12Z)-octadecatrienoyl-2-(9Z)-octadecenoyl-sn-glycero-3-phosphate + CoA. The enzyme catalyses 1-(9Z,12Z,15Z)-octadecatrienoyl-sn-glycero-3-phosphate + (9Z)-octadecenoyl-CoA = 1-(9Z,12Z,15Z)-octadecatrienoyl-2-(9Z)-octadecenoyl-sn-glycero-3-phosphate + CoA. The catalysed reaction is 1-(9Z-octadecenoyl)-sn-glycero-3-phosphate + tetradecanoyl-CoA = 1-(9Z)-octadecenoyl-2-tetradecanoyl-sn-glycero-3-phosphate + CoA. It catalyses the reaction 1-(9Z-octadecenoyl)-sn-glycero-3-phosphate + hexadecanoyl-CoA = 1-(9Z)-octadecenoyl-2-hexadecanoyl-sn-glycero-3-phosphate + CoA. It carries out the reaction 1-(9Z-octadecenoyl)-sn-glycero-3-phosphate + octadecanoyl-CoA = 1-(9Z-octadecenoyl)-2-octadecanoyl-sn-glycero-3-phosphate + CoA. The enzyme catalyses 1-(9Z-octadecenoyl)-sn-glycero-3-phosphate + (9Z,12Z)-octadecadienoyl-CoA = 1-(9Z)-octadecenoyl-2-(9Z,12Z)-octadecadienoyl-sn-glycero-3-phosphate + CoA. The catalysed reaction is 1-(5Z,8Z,11Z,14Z-eicosatetraenoyl)-sn-glycero-3-phosphate + (9Z)-octadecenoyl-CoA = 1-(5Z,8Z,11Z,14Z)-eicosatetraenoyl-2-(9Z)-octadecenoyl-sn-glycero-3-phosphate + CoA. It participates in glycerolipid metabolism; triacylglycerol biosynthesis. The protein operates within phospholipid metabolism; CDP-diacylglycerol biosynthesis; CDP-diacylglycerol from sn-glycerol 3-phosphate: step 1/3. In terms of biological role, converts glycerol-3-phosphate to 1-acyl-sn-glycerol-3-phosphate (lysophosphatidic acid or LPA) by incorporating an acyl moiety at the sn-1 position of the glycerol backbone. Also converts LPA into 1,2-diacyl-sn-glycerol-3-phosphate (phosphatidic acid or PA) by incorporating an acyl moiety at the sn-2 position of the glycerol backbone. Protects cells against lipotoxicity. The chain is Glycerol-3-phosphate acyltransferase 3 from Mus musculus (Mouse).